The chain runs to 257 residues: tRNA pseudouridine synthase A (257 aa).

Asp43 serves as the catalytic Nucleophile. Position 94 (Tyr94) interacts with substrate.

It belongs to the tRNA pseudouridine synthase TruA family.

It carries out the reaction uridine(38/39/40) in tRNA = pseudouridine(38/39/40) in tRNA. Formation of pseudouridine at positions 38, 39 and 40 in the anticodon stem and loop of transfer RNAs. This chain is tRNA pseudouridine synthase A, found in Pyrobaculum calidifontis (strain DSM 21063 / JCM 11548 / VA1).